The primary structure comprises 1173 residues: BRCA2-interacting transcriptional repressor EMSY (1173 aa).

One can recognise an ENT domain in the interval 16 to 100; the sequence is CKRILRKLEL…EWSIEGRRLV (85 aa). Low complexity predominate over residues 149–177; sequence STTSTPPSASAPSSSSAAVKSPRPASPAS. Disordered stretches follow at residues 149 to 179, 191 to 216, 676 to 720, 797 to 816, 905 to 998, 1020 to 1046, and 1139 to 1173; these read STTSTPPSASAPSSSSAAVKSPRPASPASNV, KSVSCSDEDEKPRKRRRTSSSSSSPV, NRSA…DAPP, SAEQRESPEPSGQSAAESDA, RVCE…GAQV, PRAPVSSSSSSEAALKLQAESSSEKPS, and DYTSQRLDEEQAMEQEVDSSNDEGAAASPSADQSQ. Positions 683–693 are enriched in low complexity; sequence TTSTHTSAAAA. Composition is skewed to low complexity over residues 911-921 and 937-953; these read SSSSSSSSSSS and SSSSAPATAASANTPHT. Composition is skewed to polar residues over residues 961-976 and 989-998; these read QAPTTHNRPNTHTQLS and SSKTSSGAQV. Positions 1025–1040 are enriched in low complexity; that stretch reads SSSSSSEAALKLQAES. The span at 1148–1159 shows a compositional bias: acidic residues; sequence EQAMEQEVDSSN.

In terms of assembly, homodimer.

Its subcellular location is the nucleus. Its function is as follows. Regulator which is able to repress transcription, possibly via its interaction with a multiprotein chromatin remodeling complex that modifies the chromatin. This Danio rerio (Zebrafish) protein is BRCA2-interacting transcriptional repressor EMSY.